Reading from the N-terminus, the 689-residue chain is Glycine--tRNA ligase beta subunit (689 aa).

This sequence belongs to the class-II aminoacyl-tRNA synthetase family. As to quaternary structure, tetramer of two alpha and two beta subunits.

It is found in the cytoplasm. It catalyses the reaction tRNA(Gly) + glycine + ATP = glycyl-tRNA(Gly) + AMP + diphosphate. The chain is Glycine--tRNA ligase beta subunit from Escherichia coli O17:K52:H18 (strain UMN026 / ExPEC).